Reading from the N-terminus, the 399-residue chain is Acetate kinase (399 aa).

Asparagine 7 is a Mg(2+) binding site. Residue lysine 14 participates in ATP binding. Arginine 89 serves as a coordination point for substrate. Catalysis depends on aspartate 146, which acts as the Proton donor/acceptor. Residues 206 to 210 (HIGSG), 280 to 282 (DFR), and 328 to 332 (GIGEN) each bind ATP. Glutamate 382 provides a ligand contact to Mg(2+).

The protein belongs to the acetokinase family. As to quaternary structure, homodimer. It depends on Mg(2+) as a cofactor. Requires Mn(2+) as cofactor.

It localises to the cytoplasm. It catalyses the reaction acetate + ATP = acetyl phosphate + ADP. It participates in metabolic intermediate biosynthesis; acetyl-CoA biosynthesis; acetyl-CoA from acetate: step 1/2. Its function is as follows. Catalyzes the formation of acetyl phosphate from acetate and ATP. Can also catalyze the reverse reaction. In Campylobacter hominis (strain ATCC BAA-381 / DSM 21671 / CCUG 45161 / LMG 19568 / NCTC 13146 / CH001A), this protein is Acetate kinase.